The chain runs to 308 residues: Mycothiol acetyltransferase (308 aa).

Residues 1–20 (MTSDDTAQPSGARRIETRPD) form a disordered region. N-acetyltransferase domains follow at residues 15–152 (IETR…RSLT) and 165–308 (VTVR…RSET). 1D-myo-inositol 2-(L-cysteinylamino)-2-deoxy-alpha-D-glucopyranoside is bound at residue Glu47. Acetyl-CoA is bound at residue 91–93 (LVV). 3 residues coordinate 1D-myo-inositol 2-(L-cysteinylamino)-2-deoxy-alpha-D-glucopyranoside: Glu192, Lys231, and Glu240. Acetyl-CoA is bound by residues 244-246 (VGV) and 251-257 (QGGGLGK). A 1D-myo-inositol 2-(L-cysteinylamino)-2-deoxy-alpha-D-glucopyranoside-binding site is contributed by Tyr278.

Belongs to the acetyltransferase family. MshD subfamily. As to quaternary structure, monomer.

It carries out the reaction 1D-myo-inositol 2-(L-cysteinylamino)-2-deoxy-alpha-D-glucopyranoside + acetyl-CoA = mycothiol + CoA + H(+). Functionally, catalyzes the transfer of acetyl from acetyl-CoA to desacetylmycothiol (Cys-GlcN-Ins) to form mycothiol. This chain is Mycothiol acetyltransferase, found in Streptomyces scabiei (strain 87.22).